Reading from the N-terminus, the 290-residue chain is Pyridoxal 5'-phosphate synthase subunit PdxS (290 aa).

Aspartate 22 provides a ligand contact to D-ribose 5-phosphate. Residue lysine 79 is the Schiff-base intermediate with D-ribose 5-phosphate of the active site. D-ribose 5-phosphate is bound at residue glycine 151. Residue arginine 163 coordinates D-glyceraldehyde 3-phosphate. Residues glycine 212 and glycine 233 to serine 234 contribute to the D-ribose 5-phosphate site.

Belongs to the PdxS/SNZ family. In the presence of PdxT, forms a dodecamer of heterodimers.

The enzyme catalyses aldehydo-D-ribose 5-phosphate + D-glyceraldehyde 3-phosphate + L-glutamine = pyridoxal 5'-phosphate + L-glutamate + phosphate + 3 H2O + H(+). It participates in cofactor biosynthesis; pyridoxal 5'-phosphate biosynthesis. Catalyzes the formation of pyridoxal 5'-phosphate from ribose 5-phosphate (RBP), glyceraldehyde 3-phosphate (G3P) and ammonia. The ammonia is provided by the PdxT subunit. Can also use ribulose 5-phosphate and dihydroxyacetone phosphate as substrates, resulting from enzyme-catalyzed isomerization of RBP and G3P, respectively. This is Pyridoxal 5'-phosphate synthase subunit PdxS from Clostridium botulinum (strain Loch Maree / Type A3).